Consider the following 325-residue polypeptide: Phospho-N-acetylmuramoyl-pentapeptide-transferase (325 aa).

Helical transmembrane passes span 9-29, 53-73, 77-97, 112-132, 154-174, 182-202, 204-224, 231-251, 257-277, and 305-325; these read ALLV…PWLL, TMGG…FQAF, TLLL…DDYL, KLLG…AFLG, LGNV…ANAV, GLCS…SLAL, EKGL…FLVY, VFMG…FAVL, FLLL…IQVI, and KIVL…GYGL.

The protein belongs to the glycosyltransferase 4 family. MraY subfamily. Requires Mg(2+) as cofactor.

The protein localises to the cell membrane. It carries out the reaction UDP-N-acetyl-alpha-D-muramoyl-L-alanyl-gamma-D-glutamyl-meso-2,6-diaminopimeloyl-D-alanyl-D-alanine + di-trans,octa-cis-undecaprenyl phosphate = di-trans,octa-cis-undecaprenyl diphospho-N-acetyl-alpha-D-muramoyl-L-alanyl-D-glutamyl-meso-2,6-diaminopimeloyl-D-alanyl-D-alanine + UMP. It functions in the pathway cell wall biogenesis; peptidoglycan biosynthesis. Its function is as follows. Catalyzes the initial step of the lipid cycle reactions in the biosynthesis of the cell wall peptidoglycan: transfers peptidoglycan precursor phospho-MurNAc-pentapeptide from UDP-MurNAc-pentapeptide onto the lipid carrier undecaprenyl phosphate, yielding undecaprenyl-pyrophosphoryl-MurNAc-pentapeptide, known as lipid I. This chain is Phospho-N-acetylmuramoyl-pentapeptide-transferase, found in Carboxydothermus hydrogenoformans (strain ATCC BAA-161 / DSM 6008 / Z-2901).